The chain runs to 402 residues: Multidrug resistance protein MdtH (402 aa).

Helical transmembrane passes span 13–33 (YFLL…FPLI), 45–65 (ALMV…LGIF), 99–116 (PWLL…GTLF), 139–159 (LLMM…SWLL), 165–185 (LVCA…AWLL), 214–234 (VLTL…LPIM), 244–264 (AVKW…YPIA), 277–297 (LMAG…VGNL), 300–322 (LFTL…ETLS), 340–360 (LGLA…FDMG), and 368–388 (LPWM…GWQF).

This sequence belongs to the major facilitator superfamily. DHA1 family. MdtH (TC 2.A.1.2.21) subfamily.

It is found in the cell inner membrane. This is Multidrug resistance protein MdtH from Citrobacter koseri (strain ATCC BAA-895 / CDC 4225-83 / SGSC4696).